A 145-amino-acid chain; its full sequence is Putative type I specificity subunit S.MpnORF289P C-terminus (145 aa).

Belongs to the type-I restriction system S methylase family. The methyltransferase is composed of M and S polypeptides.

The C-terminal section of a specificity (S) subunit of a type I methyltransferase (MTase); this subunit dictates DNA sequence specificity. The single R subunit has multiple frameshifts and is probably not expressed. This chain is Putative type I specificity subunit S.MpnORF289P C-terminus, found in Mycoplasma pneumoniae (strain ATCC 29342 / M129 / Subtype 1) (Mycoplasmoides pneumoniae).